Here is a 112-residue protein sequence, read N- to C-terminus: MSAEVPEAASAEEQKEMEDKVTSPEKAEEAKLKARYPHLGQKPGGSDFLRKRLQKGQKYFDSGDYNMAKAKMKNKQLPAAAPDKTEVTGDHIPTPQDLPQRKPSLVASKLAG.

The residue at position 1 (Met1) is an N-acetylmethionine. Low complexity predominate over residues 1-11 (MSAEVPEAASA). The segment at 1–49 (MSAEVPEAASAEEQKEMEDKVTSPEKAEEAKLKARYPHLGQKPGGSDFL) is disordered. Ser2 carries the post-translational modification N-acetylserine. Phosphoserine is present on residues Ser2 and Ser23. Positions 12 to 32 (EEQKEMEDKVTSPEKAEEAKL) are enriched in basic and acidic residues. 2 positions are modified to phosphoserine; by GWL: Ser62 and Ser104. Residues 74 to 112 (NKQLPAAAPDKTEVTGDHIPTPQDLPQRKPSLVASKLAG) form a disordered region. Position 104 is a phosphoserine; by PKA (Ser104). Lys109 is modified (N6-acetyllysine).

This sequence belongs to the endosulfine family. As to quaternary structure, interacts (when phosphorylated at Ser-62) with PPP2R2D. Interacts with SNCA. Interacts with PPP2R2A; the interaction is direct and this interaction inhibits PP2A activity. Phosphorylation at Ser-62 by MASTL/GWL during mitosis is essential for interaction with PPP2R2D (PR55-delta) and subsequent inactivation of PP2A. Phosphorylated by PKA.

Its subcellular location is the cytoplasm. Functionally, protein phosphatase inhibitor that specifically inhibits protein phosphatase 2A (PP2A) during mitosis. Inhibition of PP2A is enhanced when ARPP19 is phosphorylated. When phosphorylated at Ser-62 during mitosis, specifically interacts with PPP2R2D (PR55-delta) and inhibits its activity, leading to inactivation of PP2A, an essential condition to keep cyclin-B1-CDK1 activity high during M phase. May indirectly enhance GAP-43 expression by binding to the NGF-regulatory region of its mRNA. In Mus musculus (Mouse), this protein is cAMP-regulated phosphoprotein 19 (Arpp19).